The primary structure comprises 289 residues: Protease HtpX homolog (289 aa).

Helical transmembrane passes span 8-28 (LALL…VIGG) and 29-49 (SSGL…SWYQ). Residue histidine 132 participates in Zn(2+) binding. Glutamate 133 is an active-site residue. Histidine 136 contacts Zn(2+). Transmembrane regions (helical) follow at residues 151–171 (VAGA…FGGI) and 183–203 (LGVL…QLAI). Position 208 (glutamate 208) interacts with Zn(2+).

It belongs to the peptidase M48B family. Requires Zn(2+) as cofactor.

Its subcellular location is the cell inner membrane. In Trichormus variabilis (strain ATCC 29413 / PCC 7937) (Anabaena variabilis), this protein is Protease HtpX homolog.